A 404-amino-acid chain; its full sequence is 6-deoxyerythronolide B hydroxylase (404 aa).

Cysteine 351 lines the heme pocket.

Belongs to the cytochrome P450 family. Heme is required as a cofactor.

Its subcellular location is the cytoplasm. It catalyses the reaction 6-deoxyerythronolide B + 2 reduced [2Fe-2S]-[ferredoxin] + O2 + 2 H(+) = erythronolide B + 2 oxidized [2Fe-2S]-[ferredoxin] + H2O. Its pathway is antibiotic biosynthesis; erythromycin biosynthesis. Its function is as follows. Catalyzes the conversion of 6-deoxyerythronolide B (6-DEB) to erythronolide B (EB) by the insertion of an oxygen at the 6S position of 6-DEB. Requires the participation of a ferredoxin and a ferredoxin reductase for the transfer of electrons from NADPH to the monooxygenase. The polypeptide is 6-deoxyerythronolide B hydroxylase (Saccharopolyspora erythraea (strain ATCC 11635 / DSM 40517 / JCM 4748 / NBRC 13426 / NCIMB 8594 / NRRL 2338)).